The following is a 294-amino-acid chain: Porphobilinogen deaminase (294 aa).

C232 is subject to S-(dipyrrolylmethanemethyl)cysteine.

It belongs to the HMBS family. In terms of assembly, monomer. Dipyrromethane serves as cofactor.

The enzyme catalyses 4 porphobilinogen + H2O = hydroxymethylbilane + 4 NH4(+). Its pathway is porphyrin-containing compound metabolism; protoporphyrin-IX biosynthesis; coproporphyrinogen-III from 5-aminolevulinate: step 2/4. In terms of biological role, tetrapolymerization of the monopyrrole PBG into the hydroxymethylbilane pre-uroporphyrinogen in several discrete steps. The polypeptide is Porphobilinogen deaminase (Corynebacterium diphtheriae (strain ATCC 700971 / NCTC 13129 / Biotype gravis)).